Consider the following 333-residue polypeptide: Ketol-acid reductoisomerase (NADP(+)) (333 aa).

A KARI N-terminal Rossmann domain is found at 1-179 (MFYDDDADLS…GGTRAGVIKT (179 aa)). NADP(+) is bound by residues 22 to 25 (YGSQ), Lys-45, Ser-48, Ser-50, and 80 to 83 (DTAQ). His-105 is an active-site residue. Gly-131 is a binding site for NADP(+). The region spanning 180–325 (TFKDETETDL…KKLRDLMSWV (146 aa)) is the KARI C-terminal knotted domain. Mg(2+) contacts are provided by Asp-188, Glu-192, Glu-224, and Glu-228. Ser-249 is a substrate binding site.

Belongs to the ketol-acid reductoisomerase family. It depends on Mg(2+) as a cofactor.

The enzyme catalyses (2R)-2,3-dihydroxy-3-methylbutanoate + NADP(+) = (2S)-2-acetolactate + NADPH + H(+). It carries out the reaction (2R,3R)-2,3-dihydroxy-3-methylpentanoate + NADP(+) = (S)-2-ethyl-2-hydroxy-3-oxobutanoate + NADPH + H(+). The protein operates within amino-acid biosynthesis; L-isoleucine biosynthesis; L-isoleucine from 2-oxobutanoate: step 2/4. It functions in the pathway amino-acid biosynthesis; L-valine biosynthesis; L-valine from pyruvate: step 2/4. In terms of biological role, involved in the biosynthesis of branched-chain amino acids (BCAA). Catalyzes an alkyl-migration followed by a ketol-acid reduction of (S)-2-acetolactate (S2AL) to yield (R)-2,3-dihydroxy-isovalerate. In the isomerase reaction, S2AL is rearranged via a Mg-dependent methyl migration to produce 3-hydroxy-3-methyl-2-ketobutyrate (HMKB). In the reductase reaction, this 2-ketoacid undergoes a metal-dependent reduction by NADPH to yield (R)-2,3-dihydroxy-isovalerate. The protein is Ketol-acid reductoisomerase (NADP(+)) of Mycobacterium ulcerans (strain Agy99).